A 248-amino-acid chain; its full sequence is Granzyme-like protein 1 (248 aa).

Positions 1 to 18 (MNLLLLLLTVSLAPTTEA) are cleaved as a signal peptide. Positions 19 to 20 (AE) are cleaved as a propeptide — activation peptide. One can recognise a Peptidase S1 domain in the interval 21 to 246 (IIGGHEADPH…FLSWIEETMK (226 aa)). Residues Cys50 and Cys66 are joined by a disulfide bond. The Charge relay system role is filled by His65. A glycan (N-linked (GlcNAc...) asparagine) is linked at Asn72. Asp109 (charge relay system) is an active-site residue. Intrachain disulfides connect Cys143/Cys210 and Cys174/Cys189. Ser204 acts as the Charge relay system in catalysis.

This sequence belongs to the peptidase S1 family. Granzyme subfamily. Duodenum.

Functionally, this enzyme is necessary for target cell lysis in cell-mediated immune responses. The sequence is that of Granzyme-like protein 1 from Rattus norvegicus (Rat).